We begin with the raw amino-acid sequence, 273 residues long: Coiled-coil domain-containing protein 3 (273 aa).

The first 21 residues, 1 to 21 (MPLPLLLAALCLAASPAPARA), serve as a signal peptide directing secretion. Asn-100 carries N-linked (GlcNAc...) asparagine glycosylation. Positions 188–250 (SVQKALFEEE…VNQKLNEKLG (63 aa)) form a coiled coil.

In terms of assembly, homodimer. In terms of processing, N-glycosylated. As to expression, expressed in aorta and adipose tissue. Enriched in mature adipocytes. Over-expressed in adipose tissue from either hormonally-induced or nutritionally-regulated obese mice models.

The protein resides in the secreted. Functionally, negatively regulates TNF-alpha-induced pro-inflammatory response in endothelial cells (ECs) via inhibition of TNF-alpha-induced NF-kappaB activation in ECs. Positively regulates lipid accumulation in adipose cells. This Mus musculus (Mouse) protein is Coiled-coil domain-containing protein 3 (Ccdc3).